We begin with the raw amino-acid sequence, 339 residues long: D-erythrose-4-phosphate dehydrogenase (339 aa).

12-13 provides a ligand contact to NAD(+); sequence RI. Residues 154 to 156, Arg-200, 213 to 214, and Arg-236 contribute to the substrate site; these read SCT and TK. Catalysis depends on Cys-155, which acts as the Nucleophile. Asn-318 contacts NAD(+).

This sequence belongs to the glyceraldehyde-3-phosphate dehydrogenase family. Epd subfamily. In terms of assembly, homotetramer.

Its subcellular location is the cytoplasm. It catalyses the reaction D-erythrose 4-phosphate + NAD(+) + H2O = 4-phospho-D-erythronate + NADH + 2 H(+). Its pathway is cofactor biosynthesis; pyridoxine 5'-phosphate biosynthesis; pyridoxine 5'-phosphate from D-erythrose 4-phosphate: step 1/5. Its function is as follows. Catalyzes the NAD-dependent conversion of D-erythrose 4-phosphate to 4-phosphoerythronate. The polypeptide is D-erythrose-4-phosphate dehydrogenase (Photorhabdus laumondii subsp. laumondii (strain DSM 15139 / CIP 105565 / TT01) (Photorhabdus luminescens subsp. laumondii)).